Reading from the N-terminus, the 100-residue chain is Putative ESAT-6-like protein Y (100 aa).

The protein belongs to the WXG100 family.

The protein is Putative ESAT-6-like protein Y of Mycobacterium leprae (strain TN).